Here is a 208-residue protein sequence, read N- to C-terminus: MGRYRESVCRLCRRENLKLFLKGDRCFSDKCAFDRRGYPPGEHGQLRPKFSGYGIQLREKQKVKRMYGLSEGQFRRVFAEADRRKGITGSTLLVLLESRLDNAVYRLGFVNSRTQGRQLIRHNHFLVNGKNVDIPSYVLSPGDVIEVREKSRNMQVIDESLAAVERRGVPQWLSLEKENKRGVVKNLPVREDITIPIQEQLIVELYSK.

In terms of domain architecture, S4 RNA-binding spans 98-158 (SRLDNAVYRL…EKSRNMQVID (61 aa)).

This sequence belongs to the universal ribosomal protein uS4 family. In terms of assembly, part of the 30S ribosomal subunit. Contacts protein S5. The interaction surface between S4 and S5 is involved in control of translational fidelity.

Its function is as follows. One of the primary rRNA binding proteins, it binds directly to 16S rRNA where it nucleates assembly of the body of the 30S subunit. In terms of biological role, with S5 and S12 plays an important role in translational accuracy. The sequence is that of Small ribosomal subunit protein uS4 from Desulfosudis oleivorans (strain DSM 6200 / JCM 39069 / Hxd3) (Desulfococcus oleovorans).